We begin with the raw amino-acid sequence, 423 residues long: Glutamate-1-semialdehyde 2,1-aminomutase (423 aa).

Position 258 is an N6-(pyridoxal phosphate)lysine (K258).

It belongs to the class-III pyridoxal-phosphate-dependent aminotransferase family. HemL subfamily. The cofactor is pyridoxal 5'-phosphate.

The protein localises to the cytoplasm. It carries out the reaction (S)-4-amino-5-oxopentanoate = 5-aminolevulinate. It functions in the pathway porphyrin-containing compound metabolism; protoporphyrin-IX biosynthesis; 5-aminolevulinate from L-glutamyl-tRNA(Glu): step 2/2. This is Glutamate-1-semialdehyde 2,1-aminomutase from Pyrobaculum aerophilum (strain ATCC 51768 / DSM 7523 / JCM 9630 / CIP 104966 / NBRC 100827 / IM2).